Here is a 396-residue protein sequence, read N- to C-terminus: 1-deoxy-D-xylulose 5-phosphate reductoisomerase (396 aa).

Residues Thr10, Gly11, Ser12, Ile13, Gly36, Lys37, Asn38, and Asn124 each coordinate NADPH. Residue Lys125 coordinates 1-deoxy-D-xylulose 5-phosphate. Glu126 lines the NADPH pocket. Asp150 is a Mn(2+) binding site. 1-deoxy-D-xylulose 5-phosphate-binding residues include Ser151, Glu152, Ser186, and His209. A Mn(2+)-binding site is contributed by Glu152. Gly215 serves as a coordination point for NADPH. 1-deoxy-D-xylulose 5-phosphate contacts are provided by Ser222, Asn227, Lys228, and Glu231. A Mn(2+)-binding site is contributed by Glu231.

It belongs to the DXR family. Mg(2+) is required as a cofactor. Requires Mn(2+) as cofactor.

It carries out the reaction 2-C-methyl-D-erythritol 4-phosphate + NADP(+) = 1-deoxy-D-xylulose 5-phosphate + NADPH + H(+). It functions in the pathway isoprenoid biosynthesis; isopentenyl diphosphate biosynthesis via DXP pathway; isopentenyl diphosphate from 1-deoxy-D-xylulose 5-phosphate: step 1/6. Its function is as follows. Catalyzes the NADPH-dependent rearrangement and reduction of 1-deoxy-D-xylulose-5-phosphate (DXP) to 2-C-methyl-D-erythritol 4-phosphate (MEP). The sequence is that of 1-deoxy-D-xylulose 5-phosphate reductoisomerase from Actinobacillus pleuropneumoniae serotype 5b (strain L20).